Consider the following 1401-residue polypeptide: Protein dispatched homolog 2 (1401 aa).

Disordered stretches follow at residues 1 to 91 (MDGD…LAPA) and 113 to 138 (DRAA…GTWK). A helical membrane pass occupies residues 170–190 (VAVLMLCLAVIFLCTLAGLLG). Residue asparagine 239 is glycosylated (N-linked (GlcNAc...) asparagine). Residues 241–264 (SSSHNTLRPAPRGSAQESAVRPRR) are disordered. N-linked (GlcNAc...) asparagine glycosylation is found at asparagine 349 and asparagine 465. Residues 471-643 (GMDLGLKQEL…LVWLPASAVL (173 aa)) form the SSD domain. 11 consecutive transmembrane segments (helical) span residues 484-504 (FLVQ…FGMA), 510-530 (LFLT…AFFL), 542-562 (FVNL…TLIF), 589-609 (FGYL…ASYL), 617-637 (CLAL…LVWL), 704-724 (YIWI…AGVS), 964-984 (PAVV…LGTW), 990-1010 (LFSV…LVLL), 1019-1039 (ALFL…YCIS), 1064-1084 (AVGA…TVLL), and 1088-1108 (LGII…FFFQ). 3 disordered regions span residues 1169–1192 (ARRR…PSVL), 1229–1337 (PALQ…NGKR), and 1352–1401 (SLPA…GYSS). Residues 1175 to 1184 (SFDTSTATSK) show a composition bias toward polar residues. The span at 1259 to 1270 (PLPASPEAPAHS) shows a compositional bias: low complexity. Residues 1284 to 1305 (SSASTLEGLSVSDETCLSTSEP) show a composition bias toward polar residues. A compositionally biased stretch (low complexity) spans 1352–1362 (SLPASHHSSLS). The residue at position 1366 (arginine 1366) is an Omega-N-methylarginine.

This sequence belongs to the dispatched family.

The protein localises to the membrane. This is Protein dispatched homolog 2 from Homo sapiens (Human).